Here is a 423-residue protein sequence, read N- to C-terminus: Glutamate-1-semialdehyde 2,1-aminomutase (423 aa).

An N6-(pyridoxal phosphate)lysine modification is found at K259.

This sequence belongs to the class-III pyridoxal-phosphate-dependent aminotransferase family. HemL subfamily. Homodimer. The cofactor is pyridoxal 5'-phosphate.

The protein resides in the cytoplasm. The catalysed reaction is (S)-4-amino-5-oxopentanoate = 5-aminolevulinate. It participates in porphyrin-containing compound metabolism; protoporphyrin-IX biosynthesis; 5-aminolevulinate from L-glutamyl-tRNA(Glu): step 2/2. This Thermosipho africanus (strain TCF52B) protein is Glutamate-1-semialdehyde 2,1-aminomutase.